We begin with the raw amino-acid sequence, 109 residues long: Major allergen I polypeptide chain 2 (109 aa).

The signal sequence occupies residues 1 to 17 (MRGALLVLALLVTQALG). Asparagine 50 is a glycosylation site (N-linked (GlcNAc...) asparagine).

It belongs to the secretoglobin family. Heterotetramer composed of two non-covalently linked disulfide-linked heterodimer of chains 1 and 2. In terms of tissue distribution, the long form is preferentially expressed in the salivary gland, while the short form is preferentially expressed in the skin.

The protein localises to the secreted. This is Major allergen I polypeptide chain 2 (CH2) from Felis catus (Cat).